We begin with the raw amino-acid sequence, 624 residues long: Alpha-mannosidase I MNS4 (624 aa).

Topologically, residues 1–7 are cytoplasmic; the sequence is MDSNFKW. The chain crosses the membrane as a helical; Signal-anchor for type II membrane protein span at residues 8–28; that stretch reads LLFAILISLTFSGFVLHHGVL. The Lumenal segment spans residues 29–624; that stretch reads AESVKPDEAK…ETDDQRSYSS (596 aa). N-linked (GlcNAc...) asparagine glycosylation occurs at Asn-115. Glu-122 (proton donor) is an active-site residue. Residue Asp-262 is part of the active site. The active-site Proton donor is the Glu-355. The active site involves Glu-376. Thr-466 lines the Ca(2+) pocket. A glycan (N-linked (GlcNAc...) asparagine) is linked at Asn-494. The segment at 574–624 is disordered; that stretch reads QTVEKRPQEEEGFTSQSEPIMTISGGSSNDQTGQELTLLESETDDQRSYSS. Residues 586 to 608 show a composition bias toward polar residues; that stretch reads FTSQSEPIMTISGGSSNDQTGQE.

It belongs to the glycosyl hydrolase 47 family. Requires Ca(2+) as cofactor.

It is found in the endoplasmic reticulum membrane. It functions in the pathway protein modification; protein glycosylation. In terms of biological role, can convert Man(9)GlcNAc(2) and Man(8)GlcNAc(2) into N-glycans with a terminal alpha-1,6-linked Man residue in the C-branch. Functions in the formation of unique N-glycan structures that are specifically recognized by components of the endoplasmic reticulum-associated degradation (ERAD) machinery, which leads to the degradation of misfolded glycoproteins. Most likely generates N-glycan signal on misfolded glycoproteins that is subsequently recognized by OS9. Required for ERAD of the heavily glycosylated and misfolded BRI1 variants BRI1-5 and BRI1-9. Does not seem to play role in N-glycan processing of correctly folded proteins destined for secretion. This chain is Alpha-mannosidase I MNS4 (MNS4), found in Arabidopsis thaliana (Mouse-ear cress).